The chain runs to 210 residues: Large ribosomal subunit protein mL57 (210 aa).

Residues 1 to 59 (MLTRHCNRLGLQIENKFVFRSSSWNCVRRIGKIACNENKYRYEMTSTEEDIDSFFSRVF) constitute a mitochondrion transit peptide.

Belongs to the ribonuclease III family. Mitochondrion-specific ribosomal protein mL57 subfamily. Component of the mitochondrial large ribosomal subunit (mt-LSU). Mature yeast 74S mitochondrial ribosomes consist of a small (37S) and a large (54S) subunit. The 37S small subunit contains a 15S ribosomal RNA (15S mt-rRNA) and at least 32 different proteins. The 54S large subunit contains a 21S rRNA (21S mt-rRNA) and at least 45 different proteins. mL57 forms a heterodimer with mL44 and stabilizes rRNA expansion segments 1/2 at a membrane-facing protuberance close to the point of attachment of the ribosome to the translocon in the membrane.

The protein resides in the mitochondrion. Component of the mitochondrial ribosome (mitoribosome), a dedicated translation machinery responsible for the synthesis of mitochondrial genome-encoded proteins, including at least some of the essential transmembrane subunits of the mitochondrial respiratory chain. The mitoribosomes are attached to the mitochondrial inner membrane and translation products are cotranslationally integrated into the membrane. This is Large ribosomal subunit protein mL57 (mrp15) from Schizosaccharomyces pombe (strain 972 / ATCC 24843) (Fission yeast).